Here is a 940-residue protein sequence, read N- to C-terminus: Chromatin assembly factor 1 subunit FSM (940 aa).

3 disordered regions span residues 317-473, 638-682, and 919-940; these read NVDD…DPCT, VDSD…FFVP, and KTTQNVNGDTDIPRINLLPSSQ. The segment covering 320 to 329 has biased composition (polar residues); that stretch reads DSQLQKNTST. Residues 329 to 439 are a coiled coil; it reads TNEKDTQKAQ…LKKQLAIQKQ (111 aa). Over residues 330–429 the composition is skewed to basic and acidic residues; the sequence is NEKDTQKAQK…QKRREKEAVQ (100 aa). Residues 430 to 440 are compositionally biased toward low complexity; that stretch reads LKKQLAIQKQA. The span at 445–461 shows a compositional bias: basic and acidic residues; that stretch reads RFFKNKKDSEKLEKPGG. Over residues 638–650 the composition is skewed to acidic residues; sequence VDSDDEWEEEDPG.

The protein belongs to the CHAF1A family. As to quaternary structure, component of the chromatin assembly factor 1 (CAF-1) complex, composed of FSM (FAS1), FAS2 and MSI1. In embryo, expressed in leaf primordia, coleoptile and radicle. In seedlings, expressed in cell division zone of roots, SAM and leaf primordia. Expressed in floral organ primordia.

The protein resides in the nucleus. Functionally, component of the chromatin assembly factor complex (CAF-1) involved in chromatin assembly following DNA replication and DNA repair. Required for several aspects of development, including apical meristem maintenance by regulating the durations of the S- and G2-phases of the cell cycle through its chromatin assembly activity. The polypeptide is Chromatin assembly factor 1 subunit FSM (FSM) (Oryza sativa subsp. japonica (Rice)).